Reading from the N-terminus, the 83-residue chain is Mu-theraphotoxin-Hhn2l (83 aa).

The first 21 residues, 1-21 (MKASMFLALAGLVLLFVVGYA), serve as a signal peptide directing secretion. The propeptide occupies 22–48 (SESEEKEFPIELLSKIFAVDVFKGEER). Intrachain disulfides connect C50–C65, C57–C70, and C64–C77. Residue L81 is modified to Leucine amide.

Belongs to the neurotoxin 10 (Hwtx-1) family. 15 (Hntx-3) subfamily. As to quaternary structure, monomer. In terms of tissue distribution, expressed by the venom gland.

It localises to the secreted. Functionally, lethal neurotoxin. Selectively blocks tetrodotoxin-sensitive voltage-gated sodium channels (Nav). Does not affect tetrodotoxin-resistant voltage-gated sodium channels or calcium channels. The chain is Mu-theraphotoxin-Hhn2l from Cyriopagopus hainanus (Chinese bird spider).